The following is a 422-amino-acid chain: L-2-hydroxyglutarate dehydrogenase (422 aa).

Belongs to the L2HGDH family. FAD is required as a cofactor.

It is found in the cell inner membrane. The enzyme catalyses (S)-2-hydroxyglutarate + a quinone = a quinol + 2-oxoglutarate. It functions in the pathway amino-acid degradation. In terms of biological role, catalyzes the dehydrogenation of L-2-hydroxyglutarate (L2HG) to alpha-ketoglutarate and couples to the respiratory chain by feeding electrons from the reaction into the membrane quinone pool. Functions in a L-lysine degradation pathway that proceeds via cadaverine, glutarate and L-2-hydroxyglutarate. The chain is L-2-hydroxyglutarate dehydrogenase from Escherichia coli (strain K12).